The sequence spans 461 residues: L-seryl-tRNA(Sec) selenium transferase (461 aa).

Lys-294 is modified (N6-(pyridoxal phosphate)lysine).

The protein belongs to the SelA family. The cofactor is pyridoxal 5'-phosphate.

Its subcellular location is the cytoplasm. It carries out the reaction L-seryl-tRNA(Sec) + selenophosphate + H(+) = L-selenocysteinyl-tRNA(Sec) + phosphate. It participates in aminoacyl-tRNA biosynthesis; selenocysteinyl-tRNA(Sec) biosynthesis; selenocysteinyl-tRNA(Sec) from L-seryl-tRNA(Sec) (bacterial route): step 1/1. In terms of biological role, converts seryl-tRNA(Sec) to selenocysteinyl-tRNA(Sec) required for selenoprotein biosynthesis. The chain is L-seryl-tRNA(Sec) selenium transferase from Haemophilus influenzae (strain 86-028NP).